We begin with the raw amino-acid sequence, 224 residues long: Ribose-5-phosphate isomerase A (224 aa).

Residues 32-35 (TGST), 85-88 (DGAD), and 98-101 (KGGG) contribute to the substrate site. Glutamate 107 functions as the Proton acceptor in the catalytic mechanism. Position 125 (lysine 125) interacts with substrate.

It belongs to the ribose 5-phosphate isomerase family. As to quaternary structure, homodimer.

The catalysed reaction is aldehydo-D-ribose 5-phosphate = D-ribulose 5-phosphate. The protein operates within carbohydrate degradation; pentose phosphate pathway; D-ribose 5-phosphate from D-ribulose 5-phosphate (non-oxidative stage): step 1/1. Functionally, catalyzes the reversible conversion of ribose-5-phosphate to ribulose 5-phosphate. The polypeptide is Ribose-5-phosphate isomerase A (Pseudomonas putida (strain W619)).